A 336-amino-acid chain; its full sequence is tRNA-cytidine(32) 2-sulfurtransferase (336 aa).

The tract at residues 1–34 (MNAPEILNGAATASPADATEATQTAARAKTPLTR) is disordered. Residues 10-22 (AATASPADATEAT) show a composition bias toward low complexity. Residues 75–80 (SGGKDS) carry the PP-loop motif motif. 3 residues coordinate [4Fe-4S] cluster: Cys-150, Cys-153, and Cys-241.

This sequence belongs to the TtcA family. As to quaternary structure, homodimer. Requires Mg(2+) as cofactor. [4Fe-4S] cluster is required as a cofactor.

It localises to the cytoplasm. The enzyme catalyses cytidine(32) in tRNA + S-sulfanyl-L-cysteinyl-[cysteine desulfurase] + AH2 + ATP = 2-thiocytidine(32) in tRNA + L-cysteinyl-[cysteine desulfurase] + A + AMP + diphosphate + H(+). It functions in the pathway tRNA modification. In terms of biological role, catalyzes the ATP-dependent 2-thiolation of cytidine in position 32 of tRNA, to form 2-thiocytidine (s(2)C32). The sulfur atoms are provided by the cysteine/cysteine desulfurase (IscS) system. This Paraburkholderia phytofirmans (strain DSM 17436 / LMG 22146 / PsJN) (Burkholderia phytofirmans) protein is tRNA-cytidine(32) 2-sulfurtransferase.